Here is a 93-residue protein sequence, read N- to C-terminus: Large ribosomal subunit protein uL23c (93 aa).

This sequence belongs to the universal ribosomal protein uL23 family. As to quaternary structure, part of the 50S ribosomal subunit.

It localises to the plastid. Its subcellular location is the chloroplast. Binds to 23S rRNA. The chain is Large ribosomal subunit protein uL23c (rpl23) from Fragaria ananassa (Strawberry).